Reading from the N-terminus, the 355-residue chain is Tetraacyldisaccharide 4'-kinase (355 aa).

49–56 (SAGGTGKT) is a binding site for ATP.

Belongs to the LpxK family.

It carries out the reaction a lipid A disaccharide + ATP = a lipid IVA + ADP + H(+). It functions in the pathway glycolipid biosynthesis; lipid IV(A) biosynthesis; lipid IV(A) from (3R)-3-hydroxytetradecanoyl-[acyl-carrier-protein] and UDP-N-acetyl-alpha-D-glucosamine: step 6/6. Transfers the gamma-phosphate of ATP to the 4'-position of a tetraacyldisaccharide 1-phosphate intermediate (termed DS-1-P) to form tetraacyldisaccharide 1,4'-bis-phosphate (lipid IVA). The chain is Tetraacyldisaccharide 4'-kinase from Chlorobium phaeobacteroides (strain DSM 266 / SMG 266 / 2430).